The following is a 513-amino-acid chain: Cytochrome P450 monooxygenase eqxH (513 aa).

The helical transmembrane segment at 13–32 threads the bilayer; sequence QYAILCGITVFTLFIVQLSL. Residues N130 and N295 are each glycosylated (N-linked (GlcNAc...) asparagine). Heme is bound at residue C449.

It belongs to the cytochrome P450 family. The cofactor is heme.

It is found in the membrane. Its pathway is mycotoxin biosynthesis. Cytochrome P450 monooxygenase; part of the gene cluster that mediates the biosynthesis of equisetin, a trans-fused decalin-containing tetramic acid with antimicrobial activity. The PKS module of eqxS together with the enoylreductase eqxC catalyze the formation of the polyketide unit which is then conjugated to L-serine by the condensation domain of the eqxS NRPS module. Activity of the Dieckmann cyclase domain (RED) results in release of the Dieckmann product intermediate. Diels-Alderase eqx3 is involved in endo-selective Diels-Alder cycloaddition to form the decalin ring, leading to the production of N-desmethylequisetin also called trichosetin. Subsequent N-methylation is carried out by eqxD to give equisetin. The chain is Cytochrome P450 monooxygenase eqxH from Fusarium heterosporum.